A 600-amino-acid polypeptide reads, in one-letter code: Glutamine--fructose-6-phosphate aminotransferase [isomerizing] (600 aa).

C2 (nucleophile; for GATase activity) is an active-site residue. The Glutamine amidotransferase type-2 domain occupies C2 to E217. SIS domains lie at I283–F422 and I452–P590. The active-site For Fru-6P isomerization activity is K595.

As to quaternary structure, homodimer.

The protein localises to the cytoplasm. The catalysed reaction is D-fructose 6-phosphate + L-glutamine = D-glucosamine 6-phosphate + L-glutamate. Functionally, catalyzes the first step in hexosamine metabolism, converting fructose-6P into glucosamine-6P using glutamine as a nitrogen source. This chain is Glutamine--fructose-6-phosphate aminotransferase [isomerizing], found in Geobacillus kaustophilus (strain HTA426).